A 296-amino-acid polypeptide reads, in one-letter code: tRNA dimethylallyltransferase (296 aa).

ATP is bound at residue 9-16 (GPTAVGKT). 11 to 16 (TAVGKT) serves as a coordination point for substrate. The interval 34–37 (DSRQ) is interaction with substrate tRNA.

It belongs to the IPP transferase family. Monomer. Requires Mg(2+) as cofactor.

The enzyme catalyses adenosine(37) in tRNA + dimethylallyl diphosphate = N(6)-dimethylallyladenosine(37) in tRNA + diphosphate. Its function is as follows. Catalyzes the transfer of a dimethylallyl group onto the adenine at position 37 in tRNAs that read codons beginning with uridine, leading to the formation of N6-(dimethylallyl)adenosine (i(6)A). The chain is tRNA dimethylallyltransferase from Chloroflexus aurantiacus (strain ATCC 29366 / DSM 635 / J-10-fl).